Here is a 240-residue protein sequence, read N- to C-terminus: tRNA (guanine-N(1)-)-methyltransferase (240 aa).

S-adenosyl-L-methionine is bound by residues G110 and 129–134 (LGDFVL).

It belongs to the RNA methyltransferase TrmD family. Homodimer.

Its subcellular location is the cytoplasm. It catalyses the reaction guanosine(37) in tRNA + S-adenosyl-L-methionine = N(1)-methylguanosine(37) in tRNA + S-adenosyl-L-homocysteine + H(+). Specifically methylates guanosine-37 in various tRNAs. The polypeptide is tRNA (guanine-N(1)-)-methyltransferase (Clostridium botulinum (strain 657 / Type Ba4)).